Here is a 75-residue protein sequence, read N- to C-terminus: Large ribosomal subunit protein uL30 (75 aa).

The protein belongs to the universal ribosomal protein uL30 family. As to quaternary structure, part of the 50S ribosomal subunit.

The protein is Large ribosomal subunit protein uL30 of Roseiflexus castenholzii (strain DSM 13941 / HLO8).